The sequence spans 359 residues: 3-dehydroquinate synthase (359 aa).

NAD(+) is bound by residues 71–76 (DGEAYK), 105–109 (GVVGD), 129–130 (TT), lysine 142, and lysine 151. Residues glutamate 184, histidine 247, and histidine 264 each coordinate Zn(2+).

This sequence belongs to the sugar phosphate cyclases superfamily. Dehydroquinate synthase family. Co(2+) serves as cofactor. Requires Zn(2+) as cofactor. The cofactor is NAD(+).

The protein resides in the cytoplasm. It carries out the reaction 7-phospho-2-dehydro-3-deoxy-D-arabino-heptonate = 3-dehydroquinate + phosphate. Its pathway is metabolic intermediate biosynthesis; chorismate biosynthesis; chorismate from D-erythrose 4-phosphate and phosphoenolpyruvate: step 2/7. Functionally, catalyzes the conversion of 3-deoxy-D-arabino-heptulosonate 7-phosphate (DAHP) to dehydroquinate (DHQ). The sequence is that of 3-dehydroquinate synthase from Burkholderia orbicola (strain MC0-3).